Consider the following 356-residue polypeptide: uncharacterized protein (356 aa).

Helical transmembrane passes span 2–22 (FEAIIYNISVMVAGIYLFHRL), 35–55 (EYVTVLMTFVSLLLAAYPIPF), 76–96 (NMIYTLTAAFIVSLVDVFIFG), 99–119 (IIYGITLIVIAGIVSAVGPFL), 124–144 (IISLLILNLISIIILLFLALL), and 151–171 (VEILVLIPISFIITIASAITF). The GGDEF domain maps to 218–353 (QSLALLLIDI…GRNKVMFNPI (136 aa)).

It is found in the cell membrane. This is an uncharacterized protein from Staphylococcus epidermidis (strain ATCC 35984 / DSM 28319 / BCRC 17069 / CCUG 31568 / BM 3577 / RP62A).